Reading from the N-terminus, the 502-residue chain is ATP synthase subunit alpha (502 aa).

The segment at Val-115 to Gly-135 is disordered. Gly-169–Thr-176 provides a ligand contact to ATP.

The protein belongs to the ATPase alpha/beta chains family. As to quaternary structure, F-type ATPases have 2 components, CF(1) - the catalytic core - and CF(0) - the membrane proton channel. CF(1) has five subunits: alpha(3), beta(3), gamma(1), delta(1), epsilon(1). CF(0) has three main subunits: a(1), b(2) and c(9-12). The alpha and beta chains form an alternating ring which encloses part of the gamma chain. CF(1) is attached to CF(0) by a central stalk formed by the gamma and epsilon chains, while a peripheral stalk is formed by the delta and b chains.

It is found in the cell membrane. It carries out the reaction ATP + H2O + 4 H(+)(in) = ADP + phosphate + 5 H(+)(out). Functionally, produces ATP from ADP in the presence of a proton gradient across the membrane. The alpha chain is a regulatory subunit. In Bacillus cereus (strain B4264), this protein is ATP synthase subunit alpha.